The sequence spans 257 residues: MLLGVNIDHIAVLRQARMVNDPDLLEAAFIAAKYGDQITLHVREDRRHAQDFDLENIINFCKSPINLECALNDEILNLALKLKPHRVTLVPEKREELTTEGGLCLNHVKLKQSIEKLQNVNIEVSLFINPSLEDIEKSQILKAEFIELHTGHYANLHNALFSNISHTAFALKELDQDKKTLQTQFEKELQNLKLCAKKGTKLGLKVAAGHGLNYKNVKPIVKIKEICELNIGQSIVARSVFTGLQNAILEMKELIKR.

Asn6 is a binding site for 3-amino-2-oxopropyl phosphate. A 1-deoxy-D-xylulose 5-phosphate-binding site is contributed by 8 to 9; that stretch reads DH. Arg17 is a 3-amino-2-oxopropyl phosphate binding site. The active-site Proton acceptor is the His41. 1-deoxy-D-xylulose 5-phosphate is bound by residues Arg43 and His48. Catalysis depends on Glu68, which acts as the Proton acceptor. Thr98 contributes to the 1-deoxy-D-xylulose 5-phosphate binding site. His210 acts as the Proton donor in catalysis. 3-amino-2-oxopropyl phosphate contacts are provided by residues Gly211 and 232–233; that span reads GQ.

It belongs to the PNP synthase family. Homooctamer; tetramer of dimers.

The protein localises to the cytoplasm. It catalyses the reaction 3-amino-2-oxopropyl phosphate + 1-deoxy-D-xylulose 5-phosphate = pyridoxine 5'-phosphate + phosphate + 2 H2O + H(+). It functions in the pathway cofactor biosynthesis; pyridoxine 5'-phosphate biosynthesis; pyridoxine 5'-phosphate from D-erythrose 4-phosphate: step 5/5. Its function is as follows. Catalyzes the complicated ring closure reaction between the two acyclic compounds 1-deoxy-D-xylulose-5-phosphate (DXP) and 3-amino-2-oxopropyl phosphate (1-amino-acetone-3-phosphate or AAP) to form pyridoxine 5'-phosphate (PNP) and inorganic phosphate. This is Pyridoxine 5'-phosphate synthase from Campylobacter jejuni subsp. doylei (strain ATCC BAA-1458 / RM4099 / 269.97).